Consider the following 963-residue polypeptide: Ubiquitin carboxyl-terminal hydrolase 4 (963 aa).

The DUSP domain occupies 11 to 122 (PDAETQKSEL…GQQPIVRKVV (112 aa)). Residues 27–216 (TLQRGAQWYL…LYQGQVLVIE (190 aa)) form a necessary for interaction with SART3 region. A Nuclear export signal motif is present at residues 133–141 (VEVYLLELK). Residues 142–226 (LCENSDPTNV…PQNEDGTWPR (85 aa)) form the Ubiquitin-like 1 domain. Residues 219 to 277 (NEDGTWPRQTQQSKSSTAPSRNFTTSPKSSASPYSSVSASPIANGDSTNTSGMHSSGVS) are disordered. Over residues 225–243 (PRQTQQSKSSTAPSRNFTT) the composition is skewed to polar residues. Positions 229-295 (QQSKSSTAPS…SYNCQESPLT (67 aa)) are required for USP4 activation by providing conformational flexibility between the DUSP and catalytic domains. Over residues 244-261 (SPKSSASPYSSVSASPIA) the composition is skewed to low complexity. A USP domain is found at 302–923 (CGLGNLGNTC…AAYVLFYQRR (622 aa)). Catalysis depends on cysteine 311, which acts as the Nucleophile. The tract at residues 384–386 (PQF) is regulates ubiquitin dissociation. The segment at 405–407 (LHE) is necessary for interaction with RBL2. Position 445 is a phosphoserine (serine 445). The necessary for interaction with RB1 and RBL2 stretch occupies residues 459–463 (LVCPE). Residues cysteine 461 and cysteine 464 each coordinate Zn(2+). Residues 483 to 571 (LKKDRVMEIF…IFVYEVCSTS (89 aa)) form the Ubiquitin-like 2 domain. Residues 485–775 (KDRVMEIFLV…LQPQKKKKTA (291 aa)) are interacts with DUSP and ubiquitin-like 1 domains and is required for USP4 activation. Residues 634-701 (PLPDESGSSP…ATQKKNKGRP (68 aa)) are disordered. Phosphoserine occurs at positions 675 and 680. The Nuclear localization signal signature appears at 767-772 (QPQKKK). Residues cysteine 799 and cysteine 802 each contribute to the Zn(2+) site. Histidine 881 (proton acceptor) is an active-site residue. Residues 930–963 (TPSLSFPGSSDGGARPSSSQQGTGDDETYSMDTN) are disordered. Residues 953–963 (GDDETYSMDTN) show a composition bias toward acidic residues.

This sequence belongs to the peptidase C19 family. USP4 subfamily. In terms of assembly, interacts with RB1 (both dephosphorylated and hypophosphorylated forms). Interacts with RBL1 and RBL2. Interacts with ADORA2A (via cytoplasmic C-terminus); the interaction is direct. Interacts with SART3; recruits USP4 to its substrate PRPF3. Post-translationally, phosphorylated at Ser-445 by PKB/AKT1 in response to EGF stimulus, promoting its ability deubiquitinate RHEB. Monoubiquitinated by TRIM21. Ubiquitination does not lead to its proteasomal degradation. Autodeubiquitinated.

Its subcellular location is the cytoplasm. The protein resides in the nucleus. The enzyme catalyses Thiol-dependent hydrolysis of ester, thioester, amide, peptide and isopeptide bonds formed by the C-terminal Gly of ubiquitin (a 76-residue protein attached to proteins as an intracellular targeting signal).. With respect to regulation, the completion of the deubiquitinase reaction is mediated by the DUSP and ubiquitin-like 1 domains which promotes the release of ubiquitin from the catalytic site enabling subsequent reactions to occur. Its function is as follows. Deubiquitinating enzyme that removes conjugated ubiquitin from target proteins. Deubiquitinates PDPK1. Deubiquitinates TRIM21. Deubiquitinates receptor ADORA2A which increases the amount of functional receptor at the cell surface. Deubiquitinates HAS2. Deubiquitinates RHEB in response to EGF signaling, promoting mTORC1 signaling. May regulate mRNA splicing through deubiquitination of the U4 spliceosomal protein PRPF3. This may prevent its recognition by the U5 component PRPF8 thereby destabilizing interactions within the U4/U6.U5 snRNP. May also play a role in the regulation of quality control in the ER. The sequence is that of Ubiquitin carboxyl-terminal hydrolase 4 (USP4) from Bos taurus (Bovine).